A 118-amino-acid polypeptide reads, in one-letter code: Myotrophin (118 aa).

Cysteine 2 bears the N-acetylcysteine mark. Residues 2 to 30 (CDKEFMWALKNGDLDEVKDYVAKGEDVNR) form an ANK 1 repeat. N6-acetyllysine is present on residues lysine 4, lysine 11, and lysine 24. Threonine 31 is subject to Phosphothreonine. ANK repeat units follow at residues 34–66 (GGRKPLHYAADCGQLEILEFLLLKGADINAPDK) and 67–99 (HHITPLLSAVYEGHVSCVKLLLSKGADKTVKGP).

This sequence belongs to the myotrophin family. In terms of assembly, interacts with the heterodimer formed by CAPZA1 and CAPZB. Interacts with RELA.

It is found in the cytoplasm. Its subcellular location is the nucleus. It localises to the perinuclear region. Plays a role in the regulation of the growth of actin filaments. Inhibits the activity of the F-actin-capping protein complex formed by the CAPZA1 and CAPZB heterodimer. Promotes dimerization of NF-kappa-B subunits and regulates NF-kappa-B transcription factor activity. Promotes growth of cardiomyocytes, but not cardiomyocyte proliferation. Promotes cardiac muscle hypertrophy. This Rattus norvegicus (Rat) protein is Myotrophin (Mtpn).